Here is a 72-residue protein sequence, read N- to C-terminus: MSLGVLAAAIAVGLGALGAGIANGLIVSRTIEGIARQPELRPVLQTTMFIGVALVEALPIIGVVFSFIYLGR.

The next 2 membrane-spanning stretches (helical) occupy residues 1–21 and 48–68; these read MSLGVLAAAIAVGLGALGAGI and MFIGVALVEALPIIGVVFSFI.

It belongs to the ATPase C chain family. F-type ATPases have 2 components, F(1) - the catalytic core - and F(0) - the membrane proton channel. F(1) has five subunits: alpha(3), beta(3), gamma(1), delta(1), epsilon(1). F(0) has three main subunits: a(1), b(2) and c(10-14). The alpha and beta chains form an alternating ring which encloses part of the gamma chain. F(1) is attached to F(0) by a central stalk formed by the gamma and epsilon chains, while a peripheral stalk is formed by the delta and b chains.

The protein localises to the cell membrane. Functionally, f(1)F(0) ATP synthase produces ATP from ADP in the presence of a proton or sodium gradient. F-type ATPases consist of two structural domains, F(1) containing the extramembraneous catalytic core and F(0) containing the membrane proton channel, linked together by a central stalk and a peripheral stalk. During catalysis, ATP synthesis in the catalytic domain of F(1) is coupled via a rotary mechanism of the central stalk subunits to proton translocation. Its function is as follows. Key component of the F(0) channel; it plays a direct role in translocation across the membrane. A homomeric c-ring of between 10-14 subunits forms the central stalk rotor element with the F(1) delta and epsilon subunits. The sequence is that of ATP synthase subunit c from Geobacillus stearothermophilus (Bacillus stearothermophilus).